Reading from the N-terminus, the 726-residue chain is Catalase-peroxidase (726 aa).

The tryptophyl-tyrosyl-methioninium (Trp-Tyr) (with M-234) cross-link spans 85 to 208; that stretch reads WHSAGSYRIH…FAATEMGLIY (124 aa). The Proton acceptor role is filled by H86. The tryptophyl-tyrosyl-methioninium (Tyr-Met) (with W-85) cross-link spans 208-234; that stretch reads YVNPEGPMGNPDPSGSAKEIRLAFTRM. H249 contributes to the heme b binding site.

This sequence belongs to the peroxidase family. Peroxidase/catalase subfamily. As to quaternary structure, homodimer or homotetramer. It depends on heme b as a cofactor. Post-translationally, formation of the three residue Trp-Tyr-Met cross-link is important for the catalase, but not the peroxidase activity of the enzyme.

The catalysed reaction is H2O2 + AH2 = A + 2 H2O. The enzyme catalyses 2 H2O2 = O2 + 2 H2O. Functionally, bifunctional enzyme with both catalase and broad-spectrum peroxidase activity. This chain is Catalase-peroxidase, found in Pseudothermotoga lettingae (strain ATCC BAA-301 / DSM 14385 / NBRC 107922 / TMO) (Thermotoga lettingae).